Here is a 320-residue protein sequence, read N- to C-terminus: AA9 family lytic polysaccharide monooxygenase-like protein CEL1 (320 aa).

Residues 1–29 form the signal peptide; it reads MRLPSRQQVLKMLATFSLALGLFAAKVQA. Disulfide bonds link Cys-78–Cys-199 and Cys-121–Cys-126. Residue His-109 participates in Cu(2+) binding. The N-linked (GlcNAc...) asparagine glycan is linked to Asn-163. Residues His-189 and Gln-194 each coordinate O2. Tyr-196 is a binding site for Cu(2+). The interval 255 to 284 is disordered; sequence GSGGNGGSPTTTPHTTTPITTSPPPTSTPG. Positions 262–274 are enriched in low complexity; sequence SPTTTPHTTTPIT. Residues 284–320 enclose the CBM1 domain; that stretch reads GTIPQYGQCGGIGWTGGTGCVAPYQCKVINDYYSQCL.

It belongs to the polysaccharide monooxygenase AA9 family. Cu(2+) serves as cofactor.

The protein resides in the secreted. The catalysed reaction is [(1-&gt;4)-beta-D-glucosyl]n+m + reduced acceptor + O2 = 4-dehydro-beta-D-glucosyl-[(1-&gt;4)-beta-D-glucosyl]n-1 + [(1-&gt;4)-beta-D-glucosyl]m + acceptor + H2O.. Lytic polysaccharide monooxygenase (LPMO)-like protein that binds strongly to cellulose. Seems not to acts as an endoglucanase, a ceUobiohydrolase able to hydrolyze fluorogenic cellobiosides, a /3-glucosidase, a xylanase, nor a cellobiose:quinone oxidoreductase. In Agaricus bisporus (White button mushroom), this protein is AA9 family lytic polysaccharide monooxygenase-like protein CEL1.